Consider the following 154-residue polypeptide: Snaclec EMS16 subunit beta (154 aa).

An N-terminal signal peptide occupies residues 1–26; it reads MGRLISVRFSLLVVFLSLSGIGAGLC. A disulfide bridge connects residues C27 and C38. The C-type lectin domain maps to 34-147; it reads FDQHCYKVFE…CEKSVSFVCK (114 aa). N47 carries an N-linked (GlcNAc...) asparagine glycan. Cystine bridges form between C55/C146 and C121/C138.

It belongs to the snaclec family. Heterodimer of subunits A and B; disulfide-linked. Expressed by the venom gland.

It localises to the secreted. In terms of biological role, EMS16 is a potent and selective inhibitor of alpha-2/beta-1 (ITGA2/ITGB1) integrin and acts as a potent antagonist of platelet aggregation and cell migration. Binds specifically to the I domain of the alpha-2 subunit, in a metal ion-independent fashion. In Echis multisquamatus (Central Asian sand viper), this protein is Snaclec EMS16 subunit beta.